Here is a 435-residue protein sequence, read N- to C-terminus: Proline and serine-rich protein 2 (435 aa).

The span at 1–10 (MPVTHRKSDA) shows a compositional bias: basic and acidic residues. Residues 1 to 22 (MPVTHRKSDASDMNSDTSPSCR) form a disordered region. S8 is modified (phosphoserine). Residues 11–20 (SDMNSDTSPS) show a composition bias toward polar residues. S43 is modified (phosphoserine). A Phosphothreonine modification is found at T45. Low complexity-rich tracts occupy residues 92–102 (PSLEESTSSPS) and 113–126 (PAPG…LPEG). Disordered stretches follow at residues 92–276 (PSLE…RAAV) and 295–420 (AFPA…SEEA). A Phosphothreonine modification is found at T146. Residues 146–169 (TPPPPDPPAPETLLAPPPLPSTPD) are compositionally biased toward pro residues. S166 bears the Phosphoserine mark. T167 is modified (phosphothreonine). A phosphoserine mark is found at S179, S212, and S215. The segment covering 228–237 (PAARGPRSGD) has biased composition (low complexity). Asymmetric dimethylarginine; alternate is present on R252. R252 is subject to Omega-N-methylarginine; alternate. Residues 302–311 (AGEGAPGGGS) show a composition bias toward gly residues. S312 is modified (phosphoserine). R320 is subject to Omega-N-methylarginine; alternate. R320 carries the post-translational modification Dimethylated arginine; alternate. Position 378 is an omega-N-methylarginine (R378). S400 bears the Phosphoserine mark. Residue R414 is modified to Omega-N-methylarginine.

In Homo sapiens (Human), this protein is Proline and serine-rich protein 2 (PROSER2).